Here is a 226-residue protein sequence, read N- to C-terminus: E3 ubiquitin-protein ligase RNF186 (226 aa).

An RING-type zinc finger spans residues Cys-39–Arg-85. 2 consecutive transmembrane segments (helical) span residues His-157–Ile-177 and Trp-179–Pro-199.

As to quaternary structure, interacts with BNIP1. In terms of processing, polyubiquitinated. 'Lys-29'-linked autoubiquitination leads to proteasomal degradation.

It localises to the endoplasmic reticulum membrane. The catalysed reaction is S-ubiquitinyl-[E2 ubiquitin-conjugating enzyme]-L-cysteine + [acceptor protein]-L-lysine = [E2 ubiquitin-conjugating enzyme]-L-cysteine + N(6)-ubiquitinyl-[acceptor protein]-L-lysine.. It functions in the pathway protein modification; protein ubiquitination. Its function is as follows. E3 ubiquitin protein ligase that is part of an apoptotic signaling pathway activated by endoplasmic reticulum stress. Stimulates the expression of proteins specific of the unfolded protein response (UPR), ubiquitinates BNIP1 and regulates its localization to the mitochondrion and induces calcium release from the endoplasmic reticulum that ultimately leads to cell apoptosis. Plays a role in the maintenance of intestinal homeostasis and clearance of enteric pathogens. Upon NOD2 stimulation, ubiquitinates the ER stress sensor activating transcription factor 6/ATF6 and promotes the unfolded protein response UPR. Participates in basal level of autophagy maintenance by regulating the ubiquitination of EPHB2. Upon stimulation by ligand EFNB1, ubiquitinates EPHB2 and further recruits MAP1LC3B for autophagy induction. Controls nutrient sensing by ubiquitinating Sestrin-2/SESN2, which is an intracellular sensor of cytosolic leucine and inhibitor of mTORC1 activity. The polypeptide is E3 ubiquitin-protein ligase RNF186 (Mus musculus (Mouse)).